Reading from the N-terminus, the 932-residue chain is Valine--tRNA ligase (932 aa).

The 'HIGH' region signature appears at 75–85 (PNVTGQLHMGH). The short motif at 568-572 (KMSKS) is the 'KMSKS' region element. Residue K571 coordinates ATP. The stretch at 863–929 (TVDVAAERKR…ERITARLEGL (67 aa)) forms a coiled coil.

It belongs to the class-I aminoacyl-tRNA synthetase family. ValS type 1 subfamily. In terms of assembly, monomer.

The protein resides in the cytoplasm. The catalysed reaction is tRNA(Val) + L-valine + ATP = L-valyl-tRNA(Val) + AMP + diphosphate. Its function is as follows. Catalyzes the attachment of valine to tRNA(Val). As ValRS can inadvertently accommodate and process structurally similar amino acids such as threonine, to avoid such errors, it has a 'posttransfer' editing activity that hydrolyzes mischarged Thr-tRNA(Val) in a tRNA-dependent manner. The protein is Valine--tRNA ligase of Corynebacterium jeikeium (strain K411).